The primary structure comprises 353 residues: uncharacterized protein (353 aa).

Positions 233–245 (ASCSNNEPSASLE) are enriched in polar residues. The disordered stretch occupies residues 233-265 (ASCSNNEPSASLESESRHFSPVNSLSPSSLSTD). Over residues 252–263 (SPVNSLSPSSLS) the composition is skewed to low complexity.

This is an uncharacterized protein from Saccharomyces cerevisiae (strain ATCC 204508 / S288c) (Baker's yeast).